The primary structure comprises 30 residues: U-actitoxin-Bcg2a (30 aa).

An intrachain disulfide couples cysteine 7 to cysteine 27.

It is found in the secreted. The protein resides in the nematocyst. Possible voltage-gated potassium channel (Kv) blocker. This chain is U-actitoxin-Bcg2a, found in Bunodosoma cangicum (Sea anemone).